An 804-amino-acid chain; its full sequence is Elongation factor G, mitochondrial (804 aa).

Residues 1-63 (MSMHRVARAV…RHFSQSPIIR (63 aa)) constitute a mitochondrion transit peptide. The 287-residue stretch at 99–385 (RRVRNIGIAA…AVCDYLPNPA (287 aa)) folds into the tr-type G domain. GTP is bound by residues 108–115 (AHIDSGKT), 183–187 (DTPGH), and 237–240 (NKMD).

The protein belongs to the TRAFAC class translation factor GTPase superfamily. Classic translation factor GTPase family. EF-G/EF-2 subfamily.

The protein localises to the mitochondrion. Its pathway is protein biosynthesis; polypeptide chain elongation. In terms of biological role, mitochondrial GTPase that catalyzes the GTP-dependent ribosomal translocation step during translation elongation. During this step, the ribosome changes from the pre-translocational (PRE) to the post-translocational (POST) state as the newly formed A-site-bound peptidyl-tRNA and P-site-bound deacylated tRNA move to the P and E sites, respectively. Catalyzes the coordinated movement of the two tRNA molecules, the mRNA and conformational changes in the ribosome. The polypeptide is Elongation factor G, mitochondrial (mef1) (Botryotinia fuckeliana (strain B05.10) (Noble rot fungus)).